A 178-amino-acid chain; its full sequence is Large ribosomal subunit protein uL10 (178 aa).

It belongs to the universal ribosomal protein uL10 family. As to quaternary structure, part of the ribosomal stalk of the 50S ribosomal subunit. The N-terminus interacts with L11 and the large rRNA to form the base of the stalk. The C-terminus forms an elongated spine to which L12 dimers bind in a sequential fashion forming a multimeric L10(L12)X complex.

Functionally, forms part of the ribosomal stalk, playing a central role in the interaction of the ribosome with GTP-bound translation factors. In Petrotoga mobilis (strain DSM 10674 / SJ95), this protein is Large ribosomal subunit protein uL10.